The following is a 156-amino-acid chain: Small ribosomal subunit protein uS7 (156 aa).

This sequence belongs to the universal ribosomal protein uS7 family. Part of the 30S ribosomal subunit. Contacts proteins S9 and S11.

Its function is as follows. One of the primary rRNA binding proteins, it binds directly to 16S rRNA where it nucleates assembly of the head domain of the 30S subunit. Is located at the subunit interface close to the decoding center, probably blocks exit of the E-site tRNA. The protein is Small ribosomal subunit protein uS7 of Vibrio campbellii (strain ATCC BAA-1116).